The following is a 336-amino-acid chain: Phospho-N-acetylmuramoyl-pentapeptide-transferase (336 aa).

10 helical membrane passes run 3–23 (LTLIAAIISFMVSAFTMPYFI), 53–73 (GGTVFLLVATAVSLLVSLFSI), 78–98 (SLALISGILSIVVIYGIIGFL), 118–138 (LALQLAGGLMFYFLHVSPSGI), 143–163 (VFGYQLSLGIFYLFFVLFWVV), 174–194 (GIDGLASISVVISLVTYGVIA), 200–220 (FDVLLLIGAMIGALLGFFCFN), 226–246 (VFMGDVGSLALGAMLAAISIA), 251–271 (WTLLIIGIVYVLETSSVMLQV), and 316–336 (AFLWGVGSLASLLVLAILYVF).

Belongs to the glycosyltransferase 4 family. MraY subfamily. It depends on Mg(2+) as a cofactor.

Its subcellular location is the cell membrane. The catalysed reaction is UDP-N-acetyl-alpha-D-muramoyl-L-alanyl-gamma-D-glutamyl-L-lysyl-D-alanyl-D-alanine + di-trans,octa-cis-undecaprenyl phosphate = Mur2Ac(oyl-L-Ala-gamma-D-Glu-L-Lys-D-Ala-D-Ala)-di-trans,octa-cis-undecaprenyl diphosphate + UMP. Its pathway is cell wall biogenesis; peptidoglycan biosynthesis. Catalyzes the initial step of the lipid cycle reactions in the biosynthesis of the cell wall peptidoglycan: transfers peptidoglycan precursor phospho-MurNAc-pentapeptide from UDP-MurNAc-pentapeptide onto the lipid carrier undecaprenyl phosphate, yielding undecaprenyl-pyrophosphoryl-MurNAc-pentapeptide, known as lipid I. The protein is Phospho-N-acetylmuramoyl-pentapeptide-transferase of Streptococcus pyogenes serotype M3 (strain ATCC BAA-595 / MGAS315).